The following is a 154-amino-acid chain: Large ribosomal subunit protein eL24 (154 aa).

Residues 92–154 are disordered; it reads AKRNQKPEVR…AAAPRVGGKR (63 aa). Positions 96–122 are enriched in basic and acidic residues; that stretch reads QKPEVRKAQREQAVKAAKEKKKADQVG. Residues 129 to 154 show a composition bias toward low complexity; that stretch reads KARATAPKTKAPKTVKAAAPRVGGKR.

The protein belongs to the eukaryotic ribosomal protein eL24 family.

This is Large ribosomal subunit protein eL24 (RPL24) from Branchiostoma belcheri (Amphioxus).